The primary structure comprises 140 residues: Histone H2B (140 aa).

A disordered region spans residues 1 to 47 (MPPKAQKTPTTGGKAPAGKAPVEKKEAGKKTAAPSGEKKKRTKTRKE). Residue K7 is modified to N6-acetyllysine; alternate. K7 is covalently cross-linked (Glycyl lysine isopeptide (Lys-Gly) (interchain with G-Cter in SUMO); alternate). K14 bears the N6-acetyllysine mark. Position 24 is an N6-acetyllysine; alternate (K24). Residue K24 forms a Glycyl lysine isopeptide (Lys-Gly) (interchain with G-Cter in SUMO); alternate linkage. K25 is covalently cross-linked (Glycyl lysine isopeptide (Lys-Gly) (interchain with G-Cter in SUMO)). K134 is covalently cross-linked (Glycyl lysine isopeptide (Lys-Gly) (interchain with G-Cter in ubiquitin)).

It belongs to the histone H2B family. As to quaternary structure, the nucleosome is a histone octamer containing two molecules each of H2A, H2B, H3 and H4 assembled in one H3-H4 heterotetramer and two H2A-H2B heterodimers. The octamer wraps approximately 147 bp of DNA. In terms of processing, monoubiquitinated by BRE1 to form H2BK123ub1. H2BK123ub1 gives a specific tag for epigenetic transcriptional activation and is also prerequisite for H3K4me and H3K79me formation. H2BK123ub1 also modulates the formation of double-strand breaks during meiosis and is a prerequisite for DNA-damage checkpoint activation. Post-translationally, acetylated by GCN5 to form H2BK11ac and H2BK16ac. H2BK16ac can also be formed by ESA1. Acetylation of N-terminal lysines and particularly formation of H2BK11acK16ac has a positive effect on transcription. Sumoylation to form H2BK6su and probably also H2BK16su or H2BK17su, occurs preferentially near the telomeres and represses gene transcription.

It is found in the nucleus. The protein resides in the chromosome. In terms of biological role, core component of nucleosome. Nucleosomes wrap and compact DNA into chromatin, limiting DNA accessibility to the cellular machineries which require DNA as a template. Histones thereby play a central role in transcription regulation, DNA repair, DNA replication and chromosomal stability. DNA accessibility is regulated via a complex set of post-translational modifications of histones, also called histone code, and nucleosome remodeling. The sequence is that of Histone H2B (HTB1) from Phaeosphaeria nodorum (strain SN15 / ATCC MYA-4574 / FGSC 10173) (Glume blotch fungus).